We begin with the raw amino-acid sequence, 220 residues long: Fructose-6-phosphate aldolase (220 aa).

The active-site Schiff-base intermediate with substrate is lysine 85.

This sequence belongs to the transaldolase family. Type 3A subfamily. Homodecamer.

It localises to the cytoplasm. The enzyme catalyses beta-D-fructose 6-phosphate = dihydroxyacetone + D-glyceraldehyde 3-phosphate. Its function is as follows. Catalyzes the reversible formation of fructose 6-phosphate from dihydroxyacetone and D-glyceraldehyde 3-phosphate via an aldolization reaction. The protein is Fructose-6-phosphate aldolase of Klebsiella pneumoniae subsp. pneumoniae (strain ATCC 700721 / MGH 78578).